We begin with the raw amino-acid sequence, 338 residues long: Mitochondrial amidoxime reducing component 2 (338 aa).

The transit peptide at M1 to L35 directs the protein to the mitochondrion. Glycyl lysine isopeptide (Lys-Gly) (interchain with G-Cter in ubiquitin) cross-links involve residues K59, K138, and K144. K156 is subject to N6-acetyllysine; alternate. K156 is covalently cross-linked (Glycyl lysine isopeptide (Lys-Gly) (interchain with G-Cter in ubiquitin); alternate). Residues K173, K187, K289, and K296 each participate in a glycyl lysine isopeptide (Lys-Gly) (interchain with G-Cter in ubiquitin) cross-link. Residues G188–M336 enclose the MOSC domain.

As to quaternary structure, component of a complex composed of cytochrome b5, NADH-cytochrome b5 reductase (CYB5R3) and MTARC2. Mo-molybdopterin serves as cofactor. In terms of processing, ubiquitinated by PRKN during mitophagy, leading to its degradation and enhancement of mitophagy. Deubiquitinated by USP30.

It localises to the mitochondrion outer membrane. It is found in the peroxisome. The catalysed reaction is N(omega)-hydroxy-L-arginine + 2 Fe(II)-[cytochrome b5] + 2 H(+) = L-arginine + 2 Fe(III)-[cytochrome b5] + H2O. Functionally, catalyzes the reduction of N-oxygenated molecules, acting as a counterpart of cytochrome P450 and flavin-containing monooxygenases in metabolic cycles. As a component of prodrug-converting system, reduces a multitude of N-hydroxylated prodrugs particularly amidoximes, leading to increased drug bioavailability. May be involved in mitochondrial N(omega)-hydroxy-L-arginine (NOHA) reduction, regulating endogenous nitric oxide levels and biosynthesis. Postulated to cleave the N-OH bond of N-hydroxylated substrates in concert with electron transfer from NADH to cytochrome b5 reductase then to cytochrome b5, the ultimate electron donor that primes the active site for substrate reduction. The protein is Mitochondrial amidoxime reducing component 2 (Mtarc2) of Rattus norvegicus (Rat).